Here is a 477-residue protein sequence, read N- to C-terminus: MYVLHVCSELFPLLKTGGLADVVGAMPSAQIAQGANVRVLVPGFPAICAGLPDSDEVATLDTFAGRVTLRYGVYRGVGVYLIDAPHLYQRPGSPYHDQWQNAYGDNHLRFALLGWIAAELACNCDPFWRPQVVHAHDWHAGLACAYLAARGNPARSVFTVHNLAYQGLFNARHLDELALPHHFFQIYGLEFHGQISFMKAGLYYADHVTTVSPTYAQEITHPEFAYGMEGLLQWRAREGTLSGILNGVDDTIWNPASDALIARTYRRETLRDKAENKLHLQTAMGLEVNADKPLFAVVSRLTDQKGLDLLLAALPTLLEGGAQLALLGAGDAQLQEAFLAVAAEHPGQVGVQIGYHEAFSHRIMAGADVIVVPSRFEPCGLTQLYGLKYGSLPLVRHTGGLADTVNDCALENLADGSATGFVFHDANAADLARAIRRALVLWGRPTLWRYVQRQAMAQSFGWDLAAEHYLALYRRLL.

ADP-alpha-D-glucose is bound at residue Lys-15.

It belongs to the glycosyltransferase 1 family. Bacterial/plant glycogen synthase subfamily.

The catalysed reaction is [(1-&gt;4)-alpha-D-glucosyl](n) + ADP-alpha-D-glucose = [(1-&gt;4)-alpha-D-glucosyl](n+1) + ADP + H(+). It participates in glycan biosynthesis; glycogen biosynthesis. Functionally, synthesizes alpha-1,4-glucan chains using ADP-glucose. The chain is Glycogen synthase from Edwardsiella ictaluri (strain 93-146).